Consider the following 377-residue polypeptide: Probable aspartic-type endopeptidase CTSD (377 aa).

Residues 1–292 (SLIDTGASRT…DFDKNRVGLA (292 aa)) form the Peptidase A1 domain. Residue D4 is part of the active site. N-linked (GlcNAc...) asparagine glycosylation is present at N58. Residue D186 is part of the active site. Positions 296 to 351 (YGETKDPPSSSHPPPAPTSNKASGGSPGLPEQSGTSSATTSTTGEPSSGSTASPSA) are disordered. Low complexity predominate over residues 328–351 (SGTSSATTSTTGEPSSGSTASPSA). S350 carries the GPI-anchor amidated serine lipid modification. A propeptide spans 351-377 (AASSVSMSAWLSLAVFLSTASSLILWD) (removed in mature form).

It belongs to the peptidase A1 family.

The protein resides in the cell membrane. Its function is as follows. Secreted aspartic-type endopeptidase which is secreted and contributes to virulence. This Arthroderma otae (strain ATCC MYA-4605 / CBS 113480) (Microsporum canis) protein is Probable aspartic-type endopeptidase CTSD (CTSD).